The sequence spans 319 residues: Formimidoylglutamase (319 aa).

His131, Asp154, His156, Asp158, Cys248, and Asp250 together coordinate Mn(2+).

Belongs to the arginase family. The cofactor is Mn(2+).

The catalysed reaction is N-formimidoyl-L-glutamate + H2O = formamide + L-glutamate. The protein operates within amino-acid degradation; L-histidine degradation into L-glutamate; L-glutamate from N-formimidoyl-L-glutamate (hydrolase route): step 1/1. In terms of biological role, catalyzes the conversion of N-formimidoyl-L-glutamate to L-glutamate and formamide. This Legionella pneumophila (strain Paris) protein is Formimidoylglutamase.